Consider the following 350-residue polypeptide: MQRSLDSLAGMATSAFGAGTSAAMRQATSPKTILQHIINFFTCGGIRRRNETQYQELIETMAETLKSSMSDRGAPLPENIILDDVDGCRVEFNLPGENNEAGQVIVRVSKGDNSETREIPLASFEKICRALLFRCEFSLPQDSVILTAQGGMNLKGAVLTGANLTAENLCDADLSGADLEGAILFMADCDGANFKGANLSGASLGDSNLTNACLEDSIMCGATLDRANLTGANLQHTSLLGCSMVECNCSGANMDHANVSGSTLIRADMSGATLKGATIMAAIMEGAVLTRANLQKASFTATNLDGADLSEANLRNTSFKDCTLTDLRTEDATMSTSTQTLFNVFYSENI.

Pentapeptide repeat domains lie at A162 to G201, A202 to G241, C247 to G286, and A287 to D326.

As to quaternary structure, interacts with the host kinesin light chain (KLC), a subunit of the kinesin-1 motor complex.

The protein localises to the secreted. Its subcellular location is the host membrane. In terms of biological role, effector proteins function to alter host cell physiology and promote bacterial survival in host tissues. Involved in the reorganization of late endosome/lysosome (LE/Lys) compartments in mammalian cells. Necessary and sufficient to link kinesin-1 onto the Salmonella-containing vacuole (SCV) membrane. Required for centrifugal extension of lysosomal glycoprotein-rich membrane tubules, known as Salmonella-induced filaments (Sifs), away from the SCV and toward the cell periphery. Required for virulence, but not for intracellular survival and replication in phagocytic cells. The protein is Secreted effector protein PipB2 (pipB2) of Salmonella typhi.